A 449-amino-acid chain; its full sequence is Tubulin beta-2 chain (449 aa).

GTP contacts are provided by glutamine 11 and glutamate 69. Glutamate 69 is a Mg(2+) binding site. Histidine 137 carries the post-translational modification Methylhistidine. Serine 138, glycine 142, threonine 143, glycine 144, asparagine 204, and asparagine 226 together coordinate GTP.

Belongs to the tubulin family. As to quaternary structure, dimer of alpha and beta chains. A typical microtubule is a hollow water-filled tube with an outer diameter of 25 nm and an inner diameter of 15 nM. Alpha-beta heterodimers associate head-to-tail to form protofilaments running lengthwise along the microtubule wall with the beta-tubulin subunit facing the microtubule plus end conferring a structural polarity. Microtubules usually have 13 protofilaments but different protofilament numbers can be found in some organisms and specialized cells. Requires Mg(2+) as cofactor.

It localises to the cytoplasm. The protein localises to the cytoskeleton. Its function is as follows. Tubulin is the major constituent of microtubules, a cylinder consisting of laterally associated linear protofilaments composed of alpha- and beta-tubulin heterodimers. Microtubules grow by the addition of GTP-tubulin dimers to the microtubule end, where a stabilizing cap forms. Below the cap, tubulin dimers are in GDP-bound state, owing to GTPase activity of alpha-tubulin. The polypeptide is Tubulin beta-2 chain (tubC) (Emericella nidulans (strain FGSC A4 / ATCC 38163 / CBS 112.46 / NRRL 194 / M139) (Aspergillus nidulans)).